Here is a 563-residue protein sequence, read N- to C-terminus: Lengsin (563 aa).

The interval 1-115 is disordered; sequence MTDEGDLAQE…PNTDPTRYNA (115 aa). The segment covering 26-37 has biased composition (basic residues); that stretch reads SKLRRARRKVTK. Polar residues-rich tracts occupy residues 51-62 and 105-115; these read ANSSEMSRNQIA and SPNTDPTRYNA. Residues 137–231 form the GS beta-grasp domain; it reads NHLQFVRFEA…VICDTFTVTG (95 aa). The 326-residue stretch at 238–563 folds into the GS catalytic domain; that stretch reads PRYIAKRQLR…EGNKFLEYFI (326 aa).

The protein belongs to the glutamine synthetase family. As to quaternary structure, dodecamer. Interacts with BFSP2 and VIM. As to expression, expressed in lens.

Functionally, may act as a component of the cytoskeleton or as a chaperone for the reorganization of intermediate filament proteins during terminal differentiation in the lens. Does not seem to have enzymatic activity. The chain is Lengsin (Lgsn) from Mus musculus (Mouse).